The primary structure comprises 239 residues: Putative 3-methyladenine DNA glycosylase (239 aa).

It belongs to the DNA glycosylase MPG family.

This chain is Putative 3-methyladenine DNA glycosylase, found in Pseudomonas aeruginosa (strain UCBPP-PA14).